Reading from the N-terminus, the 147-residue chain is MNSFLFSLACSLLVAIPAISAQDEDAGGAGDETSEGEDTTGSDETPSTGGGGDGGNEETITAGNEDCWSKRPGWKLPDNLLTKTEFTSVDECRKMCEESAVEPSCYILQINTETNECYRNNEGDVTWSSLQYDQPNVVQWHLHACSK.

Positions 1–21 (MNSFLFSLACSLLVAIPAISA) are cleaved as a signal peptide. Residues 21-71 (AQDEDAGGAGDETSEGEDTTGSDETPSTGGGGDGGNEETITAGNEDCWSKR) are disordered. A compositionally biased stretch (acidic residues) spans 22–41 (QDEDAGGAGDETSEGEDTTG). Intrachain disulfides connect Cys-67–Cys-145, Cys-92–Cys-117, and Cys-96–Cys-105.

Post-translationally, the N-terminus is blocked. In terms of tissue distribution, expressed by salivary glands.

The protein resides in the secreted. Its function is as follows. Inhibits collagen-stimulated platelet aggregation (IC(50)=60 nM), dense granule release and serotonin release. Does not inhibit platelet aggregation induced by ADP, arachidonic acid, and thrombin. The protein is Leech anti-platelet protein of Haementeria officinalis (Mexican leech).